Consider the following 615-residue polypeptide: Proteasome-associated ATPase (615 aa).

The disordered stretch occupies residues 1-36 (MSESERPEAGDGTDALGASPDTPLSSEDAAELEQLR). A coiled-coil region spans residues 25 to 102 (SSEDAAELEQ…LREEVDRLGQ (78 aa)). 302-307 (GCGKTL) contributes to the ATP binding site. The docks into pockets in the proteasome alpha-ring stretch occupies residues 614 to 615 (YL).

This sequence belongs to the AAA ATPase family. As to quaternary structure, homohexamer. Assembles into a hexameric ring structure that caps the 20S proteasome core. Strongly interacts with the prokaryotic ubiquitin-like protein Pup through a hydrophobic interface; the interacting region of ARC lies in its N-terminal coiled-coil domain. There is one Pup binding site per ARC hexamer ring. Upon ATP-binding, the C-terminus of ARC interacts with the alpha-rings of the proteasome core, possibly by binding to the intersubunit pockets.

The protein operates within protein degradation; proteasomal Pup-dependent pathway. Its function is as follows. ATPase which is responsible for recognizing, binding, unfolding and translocation of pupylated proteins into the bacterial 20S proteasome core particle. May be essential for opening the gate of the 20S proteasome via an interaction with its C-terminus, thereby allowing substrate entry and access to the site of proteolysis. Thus, the C-termini of the proteasomal ATPase may function like a 'key in a lock' to induce gate opening and therefore regulate proteolysis. The chain is Proteasome-associated ATPase from Mycolicibacterium gilvum (strain PYR-GCK) (Mycobacterium gilvum (strain PYR-GCK)).